A 326-amino-acid polypeptide reads, in one-letter code: Target of rapamycin complex subunit LST8 (326 aa).

Methionine 1 carries the post-translational modification N-acetylmethionine. 5 WD repeats span residues 1 to 37 (MNTTPGTVGSDPVILATAGYDHTVRFWQAHSGICTRT), 40 to 80 (HQDS…PIIS), 83 to 122 (GVSKNIASVGFHEDGRWMYTGGEDCTARIWDLRSRNLQCQ), 126 to 165 (QVNAPINCVCLHPNQAELIVGDQSGTSHIWDLKTDHNEQL), and 168 to 207 (EPEFSITSAHIDPDASYMAAVNSAGNCFVWNLTGGIGDEV). Threonine 51 carries the post-translational modification Phosphothreonine. Lysine 86 is covalently cross-linked (Glycyl lysine isopeptide (Lys-Gly) (interchain with G-Cter in SUMO3)). Glycyl lysine isopeptide (Lys-Gly) (interchain with G-Cter in SUMO3) cross-links involve residues lysine 215, lysine 245, and lysine 261. A WD 6 repeat occupies 218–257 (AHTRYALQCRFSPDSTLLATCSADQTCKIWRTSNFSLMTE). One copy of the WD 7 repeat lies at 268–309 (SSRGWMWGCAFSGDSQYIVTASSDNLARLWCVETGEIKREYG). Residue lysine 305 forms a Glycyl lysine isopeptide (Lys-Gly) (interchain with G-Cter in SUMO3); alternate linkage. Residues lysine 305 and lysine 313 each participate in a glycyl lysine isopeptide (Lys-Gly) (interchain with G-Cter in ubiquitin); alternate cross-link. Lysine 313 is covalently cross-linked (Glycyl lysine isopeptide (Lys-Gly) (interchain with G-Cter in SUMO1); alternate).

It belongs to the WD repeat LST8 family. Part of the mechanistic target of rapamycin complex 1 (mTORC1) which contains MTOR, MLST8 and RPTOR. mTORC1 associates with AKT1S1/PRAS40, which inhibits its activity. mTORC1 binds to and is inhibited by FKBP12-rapamycin. Within mTORC1, interacts directly with MTOR and RPTOR. Component of the mechanistic target of rapamycin complex 2 (mTORC2), consisting in two heterotretramers composed of MTOR, MLST8, RICTOR and MAPKAP1/SIN1. Contrary to mTORC1, mTORC2 does not bind to and is not sensitive to FKBP12-rapamycin. mTORC1 and mTORC2 associate with DEPTOR, which regulates their activity. Interacts with RHEB. Interacts with MEAK7. Interacts with SIK3. Interacts with SLC38A7; this interaction promotes the recruitment of mTORC1 to the lysosome and its subsequent activation. Post-translationally, phosphorylation at Thr-51 by CDK1 promotes ubiquitination by the SCF(FBXW7) complex, followed by degradation. In terms of processing, ubiquitination by the SCF(FBXW7) and SCF(FBXW11) complexes following phosphorylation at Thr-51 by CDK1, leads to its degradation by the proteasome. Ubiquitination at Lys-305 and Lys-313 by TRAF2 via 'Lys-63'-linked polyubiquitin chains inhibits formation of the mTORC2 complex, while promoting formation of the mTORC1 complex: ubiquitination disrupts the interaction between MLST8 and MAPKAP1/SIN1 to favor mTORC1 assembly. Deubiquitination at Lys-305 and Lys-313 by OTUD7B promotes MLST8 interaction with MAPKAP1/SIN1, facilitating mTORC2 assembly. Sumoylation with SUMO1, SUMO2 and SUMO3 promotes assembly of both mTORC1 and mTORC2 complexes. In terms of tissue distribution, expressed at highest levels in the brain and testis, followed by lung, heart, kidney, skeletal muscle, spleen and liver. Also expressed in epididymal, abdominal and brown fat, small intestine and pancreas.

It localises to the lysosome membrane. The protein localises to the cytoplasm. Functionally, subunit of both mTORC1 and mTORC2, which regulates cell growth and survival in response to nutrient and hormonal signals. mTORC1 is activated in response to growth factors or amino acids. In response to nutrients, mTORC1 is recruited to the lysosome membrane and promotes protein, lipid and nucleotide synthesis by phosphorylating several substrates, such as ribosomal protein S6 kinase (RPS6KB1 and RPS6KB2) and EIF4EBP1 (4E-BP1). In the same time, it inhibits catabolic pathways by phosphorylating the autophagy initiation components ULK1 and ATG13, as well as transcription factor TFEB, a master regulators of lysosomal biogenesis and autophagy. The mTORC1 complex is inhibited in response to starvation and amino acid depletion. Within mTORC1, MLST8 interacts directly with MTOR and enhances its kinase activity. In nutrient-poor conditions, stabilizes the MTOR-RPTOR interaction and favors RPTOR-mediated inhibition of MTOR activity. As part of the mTORC2 complex, transduces signals from growth factors to pathways involved in proliferation, cytoskeletal organization, lipogenesis and anabolic output. mTORC2 is also activated by growth factors, but seems to be nutrient-insensitive. In response to growth factors, mTORC2 phosphorylates and activates AGC protein kinase family members, including AKT (AKT1, AKT2 and AKT3), PKC (PRKCA, PRKCB and PRKCE) and SGK1. mTORC2 functions upstream of Rho GTPases to regulate the actin cytoskeleton, probably by activating one or more Rho-type guanine nucleotide exchange factors. mTORC2 promotes the serum-induced formation of stress-fibers or F-actin. mTORC2 plays a critical role in AKT1 activation by mediating phosphorylation of different sites depending on the context, such as 'Thr-450', 'Ser-473', 'Ser-477' or 'Thr-479', facilitating the phosphorylation of the activation loop of AKT1 on 'Thr-308' by PDPK1/PDK1 which is a prerequisite for full activation. mTORC2 regulates the phosphorylation of SGK1 at 'Ser-422'. mTORC2 also modulates the phosphorylation of PRKCA on 'Ser-657'. Within mTORC2, MLST8 acts as a bridge between MAPKAP1/SIN1 and MTOR. In Rattus norvegicus (Rat), this protein is Target of rapamycin complex subunit LST8.